Consider the following 344-residue polypeptide: Dihydroorotase (344 aa).

Zn(2+) contacts are provided by His13 and His15. Residues 15 to 17 (HLR) and Asn41 contribute to the substrate site. Positions 99, 136, and 174 each coordinate Zn(2+). An N6-carboxylysine modification is found at Lys99. His136 provides a ligand contact to substrate. Leu219 lines the substrate pocket. Residue Asp247 participates in Zn(2+) binding. Asp247 is a catalytic residue. Residues His251 and Ala263 each coordinate substrate.

The protein belongs to the metallo-dependent hydrolases superfamily. DHOase family. Class II DHOase subfamily. As to quaternary structure, homodimer. Zn(2+) serves as cofactor.

The catalysed reaction is (S)-dihydroorotate + H2O = N-carbamoyl-L-aspartate + H(+). It functions in the pathway pyrimidine metabolism; UMP biosynthesis via de novo pathway; (S)-dihydroorotate from bicarbonate: step 3/3. Its function is as follows. Catalyzes the reversible cyclization of carbamoyl aspartate to dihydroorotate. This chain is Dihydroorotase, found in Acinetobacter baumannii (strain SDF).